Here is a 240-residue protein sequence, read N- to C-terminus: Protein FAM246C (240 aa).

Disordered stretches follow at residues 1–117 and 161–240; these read MAEP…WRSA and LPAA…TRAA. 2 stretches are compositionally biased toward basic and acidic residues: residues 19-31 and 60-74; these read EVLR…RRDP and AASR…KLVE. Residues 165 to 175 show a composition bias toward pro residues; that stretch reads SPAPSPAPRPA. Low complexity predominate over residues 176–187; it reads ARPCRGRSAPLA.

It belongs to the FAM246 family.

The chain is Protein FAM246C from Homo sapiens (Human).